The primary structure comprises 599 residues: Chaperone protein DnaK (599 aa).

T187 carries the post-translational modification Phosphothreonine; by autocatalysis. The interval 575-599 (AQQAATENSKDSDTVEAEIVDDKAN) is disordered.

The protein belongs to the heat shock protein 70 family.

Functionally, acts as a chaperone. This Mycoplasmopsis pulmonis (strain UAB CTIP) (Mycoplasma pulmonis) protein is Chaperone protein DnaK.